Reading from the N-terminus, the 170-residue chain is Protein-export protein SecB (170 aa).

This sequence belongs to the SecB family. As to quaternary structure, homotetramer, a dimer of dimers. One homotetramer interacts with 1 SecA dimer.

The protein resides in the cytoplasm. Functionally, one of the proteins required for the normal export of preproteins out of the cell cytoplasm. It is a molecular chaperone that binds to a subset of precursor proteins, maintaining them in a translocation-competent state. It also specifically binds to its receptor SecA. This is Protein-export protein SecB from Xanthomonas axonopodis pv. citri (strain 306).